A 412-amino-acid polypeptide reads, in one-letter code: Lipoyl synthase, mitochondrial (412 aa).

Positions 127, 132, 138, 159, 163, 166, and 375 each coordinate [4Fe-4S] cluster. Positions 142–364 (SDDEGTATAT…EKEAMDMGFL (223 aa)) constitute a Radical SAM core domain.

Belongs to the radical SAM superfamily. Lipoyl synthase family. Requires [4Fe-4S] cluster as cofactor.

The protein localises to the mitochondrion. The enzyme catalyses [[Fe-S] cluster scaffold protein carrying a second [4Fe-4S](2+) cluster] + N(6)-octanoyl-L-lysyl-[protein] + 2 oxidized [2Fe-2S]-[ferredoxin] + 2 S-adenosyl-L-methionine + 4 H(+) = [[Fe-S] cluster scaffold protein] + N(6)-[(R)-dihydrolipoyl]-L-lysyl-[protein] + 4 Fe(3+) + 2 hydrogen sulfide + 2 5'-deoxyadenosine + 2 L-methionine + 2 reduced [2Fe-2S]-[ferredoxin]. Its pathway is protein modification; protein lipoylation via endogenous pathway; protein N(6)-(lipoyl)lysine from octanoyl-[acyl-carrier-protein]: step 2/2. In terms of biological role, catalyzes the radical-mediated insertion of two sulfur atoms into the C-6 and C-8 positions of the octanoyl moiety bound to the lipoyl domains of lipoate-dependent enzymes, thereby converting the octanoylated domains into lipoylated derivatives. This chain is Lipoyl synthase, mitochondrial, found in Leishmania infantum.